We begin with the raw amino-acid sequence, 373 residues long: L-threonine 3-dehydrogenase, mitochondrial (373 aa).

NAD(+) contacts are provided by residues 62-67 (GGLGQL), 88-90 (DIR), 106-107 (DI), tyrosine 195, lysine 199, and isoleucine 225. The active-site Proton donor/acceptor is tyrosine 195.

The protein belongs to the NAD(P)-dependent epimerase/dehydratase family. As to quaternary structure, homodimer.

Its subcellular location is the mitochondrion. It catalyses the reaction L-threonine + NAD(+) = (2S)-2-amino-3-oxobutanoate + NADH + H(+). It participates in amino-acid degradation; L-threonine degradation via oxydo-reductase pathway; glycine from L-threonine: step 1/2. Catalyzes the NAD(+)-dependent oxidation of L-threonine to 2-amino-3-ketobutyrate, mediating L-threonine catabolism. The chain is L-threonine 3-dehydrogenase, mitochondrial from Sus scrofa (Pig).